The following is a 334-amino-acid chain: Fructose-1,6-bisphosphatase class 1 (334 aa).

4 residues coordinate Mg(2+): glutamate 90, aspartate 113, leucine 115, and aspartate 116. Substrate is bound by residues 116–119, asparagine 209, tyrosine 242, and lysine 272; that span reads DGSS. Glutamate 278 contacts Mg(2+).

It belongs to the FBPase class 1 family. In terms of assembly, homotetramer. It depends on Mg(2+) as a cofactor.

It localises to the cytoplasm. It catalyses the reaction beta-D-fructose 1,6-bisphosphate + H2O = beta-D-fructose 6-phosphate + phosphate. The protein operates within carbohydrate biosynthesis; gluconeogenesis. The polypeptide is Fructose-1,6-bisphosphatase class 1 (Haemophilus ducreyi (strain 35000HP / ATCC 700724)).